The sequence spans 450 residues: Tubulin alpha chain (450 aa).

Gln11 provides a ligand contact to GTP. Position 40 is an N6-acetyllysine (Lys40). GTP-binding residues include Glu71, Ser140, Gly144, Thr145, Thr179, Asn206, and Asn228. Residue Glu71 participates in Mg(2+) binding. Residue Glu254 is part of the active site.

The protein belongs to the tubulin family. Dimer of alpha and beta chains. A typical microtubule is a hollow water-filled tube with an outer diameter of 25 nm and an inner diameter of 15 nM. Alpha-beta heterodimers associate head-to-tail to form protofilaments running lengthwise along the microtubule wall with the beta-tubulin subunit facing the microtubule plus end conferring a structural polarity. Microtubules usually have 13 protofilaments but different protofilament numbers can be found in some organisms and specialized cells. It depends on Mg(2+) as a cofactor. Post-translationally, undergoes a tyrosination/detyrosination cycle, the cyclic removal and re-addition of a C-terminal tyrosine residue by the enzymes tubulin tyrosine carboxypeptidase (TTCP) and tubulin tyrosine ligase (TTL), respectively. In terms of processing, acetylation of alpha chains at Lys-40 stabilizes microtubules and affects affinity and processivity of microtubule motors. This modification has a role in multiple cellular functions, ranging from cell motility, cell cycle progression or cell differentiation to intracellular trafficking and signaling.

Its subcellular location is the cytoplasm. The protein localises to the cytoskeleton. The enzyme catalyses GTP + H2O = GDP + phosphate + H(+). Its function is as follows. Tubulin is the major constituent of microtubules, a cylinder consisting of laterally associated linear protofilaments composed of alpha- and beta-tubulin heterodimers. Microtubules grow by the addition of GTP-tubulin dimers to the microtubule end, where a stabilizing cap forms. Below the cap, tubulin dimers are in GDP-bound state, owing to GTPase activity of alpha-tubulin. This is Tubulin alpha chain from Haemonchus contortus (Barber pole worm).